Reading from the N-terminus, the 442-residue chain is 26S proteasome non-ATPase regulatory subunit 12 homolog B (442 aa).

A coiled-coil region spans residues 1 to 129 (MEESRQLESS…KEEQGLIAEA (129 aa)). One can recognise a PCI domain in the interval 232–403 (EICRSYKAIY…GIICFQIVKD (172 aa)).

The protein belongs to the proteasome subunit p55 family. Component of the 19S regulatory particle (RP/PA700) lid subcomplex of the 26S proteasome. The 26S proteasome is composed of a core protease (CP), known as the 20S proteasome, capped at one or both ends by the 19S regulatory particle (RP/PA700). The RP/PA700 complex is composed of at least 17 different subunits in two subcomplexes, the base and the lid, which form the portions proximal and distal to the 20S proteolytic core, respectively. As to expression, ubiquitous with highest expression in flowers.

It is found in the cytoplasm. The protein resides in the nucleus. Functionally, acts as a regulatory subunit of the 26 proteasome which is involved in the ATP-dependent degradation of ubiquitinated proteins. Acts redundantly with RPN5A. The sequence is that of 26S proteasome non-ATPase regulatory subunit 12 homolog B (RPN5B) from Arabidopsis thaliana (Mouse-ear cress).